The following is a 233-amino-acid chain: Uracil-DNA glycosylase (233 aa).

Aspartate 70 (proton acceptor) is an active-site residue.

It belongs to the uracil-DNA glycosylase (UDG) superfamily. UNG family.

The protein localises to the cytoplasm. It carries out the reaction Hydrolyzes single-stranded DNA or mismatched double-stranded DNA and polynucleotides, releasing free uracil.. Its function is as follows. Excises uracil residues from the DNA which can arise as a result of misincorporation of dUMP residues by DNA polymerase or due to deamination of cytosine. This chain is Uracil-DNA glycosylase, found in Oleidesulfovibrio alaskensis (strain ATCC BAA-1058 / DSM 17464 / G20) (Desulfovibrio alaskensis).